The following is a 584-amino-acid chain: 65 kDa membrane protein (584 aa).

The N-terminal stretch at 1-30 is a signal peptide; the sequence is MKFKSLITTTLALGVLASTGANFNNNEASA. MAP repeat units follow at residues 45-154, 156-265, 266-374, 375-474, and 475-584; these read GYSK…EDKK, DKAN…ENKA, KRNY…KADR, YVPY…TGTK, and AKAD…KKNK.

Its subcellular location is the cell membrane. Functionally, binds various plasma and ECM-proteins. This is 65 kDa membrane protein from Staphylococcus aureus (strain Newman).